Consider the following 1434-residue polypeptide: DNA-directed RNA polymerase subunit beta (1434 aa).

The protein belongs to the RNA polymerase beta chain family. In terms of assembly, the RNAP catalytic core consists of 2 alpha, 1 beta, 1 beta' and 1 omega subunit. When a sigma factor is associated with the core the holoenzyme is formed, which can initiate transcription.

It carries out the reaction RNA(n) + a ribonucleoside 5'-triphosphate = RNA(n+1) + diphosphate. In terms of biological role, DNA-dependent RNA polymerase catalyzes the transcription of DNA into RNA using the four ribonucleoside triphosphates as substrates. This chain is DNA-directed RNA polymerase subunit beta, found in Ureaplasma parvum serovar 3 (strain ATCC 27815 / 27 / NCTC 11736).